A 489-amino-acid polypeptide reads, in one-letter code: MTAVTALSVASEIYPLIKTGGLADVAGALPAALLPHGVTMRTLVPGYPAVLAGIESAAPVHSFAMLFGGPARLLAARKGGLDLFVLEAPHLYDRPGSPYSGPDGKDWPDNAYRFAALARTAAEIGQGLVPSFVPDIIHAHDWQAGLTPAYLRYSGKPQPATVFTVHNLAFQGQFPRELLATLGLPPGAFSVDGVEYYGSIGYMKSGLQLSDRITTVSPAYALEIQGPQAGMGLDGLLRQRAAQLTGILNGIDDKVWNPATDKRITATYDLDHLAARRANTQSVRELFDLSLDPDRLLLGVISRLSWQKGLDLLLEALPVLLAEGIQLALLGAGDPELEERFKSAAQAYPGQIGVMIGYDEDLAHLIQAGADALLVPSRFEPCGLTQLCALRYGAVPVVARVGGLSDTVVDANEMAIAAGVATGVQFSPVTGDMLAAALSKTRALYADRAAWQALQHNGMTADVSWRNPAQHYAQLYRSLLAARQSRATA.

Lys18 is a binding site for ADP-alpha-D-glucose.

Belongs to the glycosyltransferase 1 family. Bacterial/plant glycogen synthase subfamily.

The catalysed reaction is [(1-&gt;4)-alpha-D-glucosyl](n) + ADP-alpha-D-glucose = [(1-&gt;4)-alpha-D-glucosyl](n+1) + ADP + H(+). Its pathway is glycan biosynthesis; glycogen biosynthesis. In terms of biological role, synthesizes alpha-1,4-glucan chains using ADP-glucose. The polypeptide is Glycogen synthase (Rhodopseudomonas palustris (strain BisB18)).